The chain runs to 284 residues: uncharacterized protein (284 aa).

Residues 1–10 show a composition bias toward polar residues; it reads MSNSVTNFEM. The segment at 1–28 is disordered; sequence MSNSVTNFEMSSVLPGKKPCQGKNNESQ.

This is an uncharacterized protein from Escherichia coli (strain K12).